Consider the following 175-residue polypeptide: Peptide deformylase (175 aa).

Residues cysteine 96 and histidine 138 each contribute to the Fe cation site. Glutamate 139 is an active-site residue. Histidine 142 serves as a coordination point for Fe cation.

The protein belongs to the polypeptide deformylase family. Requires Fe(2+) as cofactor.

It catalyses the reaction N-terminal N-formyl-L-methionyl-[peptide] + H2O = N-terminal L-methionyl-[peptide] + formate. In terms of biological role, removes the formyl group from the N-terminal Met of newly synthesized proteins. Requires at least a dipeptide for an efficient rate of reaction. N-terminal L-methionine is a prerequisite for activity but the enzyme has broad specificity at other positions. The chain is Peptide deformylase from Rhodopseudomonas palustris (strain BisB5).